Reading from the N-terminus, the 213-residue chain is Small ribosomal subunit protein uS5 (213 aa).

The S5 DRBM domain occupies 54 to 117 (LKSETVDVRL…RNAKLNIIPV (64 aa)).

It belongs to the universal ribosomal protein uS5 family. As to quaternary structure, part of the 30S ribosomal subunit. Contacts protein S4.

In terms of biological role, with S4 and S12 plays an important role in translational accuracy. This is Small ribosomal subunit protein uS5 from Hyperthermus butylicus (strain DSM 5456 / JCM 9403 / PLM1-5).